Reading from the N-terminus, the 1692-residue chain is Tyrosine-protein phosphatase non-receptor type 23 (1692 aa).

The BRO1 domain maps to 8–394 (PMIWLDLKEA…AKIEDKNEVL (387 aa)). TPR repeat units lie at residues 250-283 (AVAH…LNEA) and 374-407 (EEKA…DPET). Positions 552–639 (KAVLQNLKRI…RALTEANVQY (88 aa)) form a coiled coil. Disordered stretches follow at residues 711 to 788 (DREL…PATH), 884 to 923 (DSVQ…PQPQ), and 944 to 1199 (TYSI…LLQP). The residue at position 744 (T744) is a Phosphothreonine. The tract at residues 773–1186 (HFSPGPFPSS…SSSPESQHGG (414 aa)) is his. Residues 774–785 (FSPGPFPSSTGP) are compositionally biased toward low complexity. Polar residues predominate over residues 884 to 894 (DSVQAPISSHT). Positions 897-923 (RPNPTPALPQPCFPVPQPVPQSVPQPQ) are enriched in pro residues. Residue R974 is modified to Omega-N-methylarginine. 21 repeat units span residues 977-978 (PQ), 979-980 (AQ), 981-982 (AQ), 983-984 (PQ), 985-986 (PQ), 987-988 (PQ), 989-990 (PQ), 991-992 (PQ), 993-994 (PQ), 995-996 (PQ), 997-998 (PQ), 999-1000 (PQ), 1001-1002 (PQ), 1003-1004 (PQ), 1005-1006 (SQ), 1007-1008 (SQ), 1009-1010 (PQ), 1011-1012 (PQ), 1013-1014 (PQ), 1015-1016 (PQ), and 1017-1018 (PQ). Residues 977-1018 (PQAQAQPQPQPQPQPQPQPQPQPQPQPQSQSQPQPQPQPQPQ) are 21 X 2 AA approximate tandem repeats of P-Q. Pro residues predominate over residues 984–1002 (QPQPQPQPQPQPQPQPQPQ). Composition is skewed to pro residues over residues 1093–1102 (FPSPGPPHPH) and 1127–1165 (GPPP…PPPC). Phosphoserine is present on residues S1178 and S1179. T1187 is modified (phosphothreonine). Residues 1248–1508 (DAIWRELQEA…KFCHEALVRH (261 aa)) enclose the Tyrosine-protein phosphatase domain. C1448 functions as the Phosphocysteine intermediate in the catalytic mechanism. Residues 1574–1638 (ASLPGLVEPP…PSSSLELLAS (65 aa)) form a disordered region. The segment covering 1598–1612 (SSSPPPLSSPLPEAP) has biased composition (pro residues). Low complexity predominate over residues 1620–1638 (VPEAPSLGPPSSSLELLAS). The residue at position 1671 (R1671) is an Omega-N-methylarginine.

Belongs to the protein-tyrosine phosphatase family. Non-receptor class subfamily. As to quaternary structure, interacts with GRAP2 and GRB2. Interacts with UBAP1 and CHMP4B.

Its subcellular location is the nucleus. It is found in the cytoplasm. The protein resides in the cytoplasmic vesicle. The protein localises to the endosome. It localises to the cytoskeleton. Its subcellular location is the cilium basal body. It carries out the reaction O-phospho-L-tyrosyl-[protein] + H2O = L-tyrosyl-[protein] + phosphate. Plays a role in sorting of endocytic ubiquitinated cargos into multivesicular bodies (MVBs) via its interaction with the ESCRT-I complex (endosomal sorting complex required for transport I), and possibly also other ESCRT complexes. May act as a negative regulator of Ras-mediated mitogenic activity. Plays a role in ciliogenesis. The protein is Tyrosine-protein phosphatase non-receptor type 23 (Ptpn23) of Mus musculus (Mouse).